The following is a 552-amino-acid chain: DNA ligase (552 aa).

Glutamate 229 contributes to the ATP binding site. The active-site N6-AMP-lysine intermediate is lysine 231. Positions 236 and 283 each coordinate ATP. Mg(2+)-binding residues include glutamate 283 and glutamate 377. ATP is bound by residues lysine 382 and lysine 397.

Belongs to the ATP-dependent DNA ligase family. As to quaternary structure, interacts with host TOP2A and TOP2B. Mg(2+) is required as a cofactor.

It is found in the host cytoplasm. It catalyses the reaction ATP + (deoxyribonucleotide)n-3'-hydroxyl + 5'-phospho-(deoxyribonucleotide)m = (deoxyribonucleotide)n+m + AMP + diphosphate.. DNA ligase that seals nicks in double-stranded DNA during DNA replication, DNA recombination and DNA repair. Recruits cellular topoisomerase II to sites of viral replication and assembly. The polypeptide is DNA ligase (OPG180) (Homo sapiens (Human)).